The sequence spans 131 residues: Small ribosomal subunit protein uS8 (131 aa).

Belongs to the universal ribosomal protein uS8 family. Part of the 30S ribosomal subunit. Contacts proteins S5 and S12.

In terms of biological role, one of the primary rRNA binding proteins, it binds directly to 16S rRNA central domain where it helps coordinate assembly of the platform of the 30S subunit. The chain is Small ribosomal subunit protein uS8 from Campylobacter lari (strain RM2100 / D67 / ATCC BAA-1060).